A 673-amino-acid chain; its full sequence is Methionine--tRNA ligase (673 aa).

A 'HIGH' region motif is present at residues P13–H23. Zn(2+) contacts are provided by C144, C147, C157, and C160. The short motif at K330 to S334 is the 'KMSKS' region element. K333 contributes to the ATP binding site. The 102-residue stretch at D572–S673 folds into the tRNA-binding domain.

It belongs to the class-I aminoacyl-tRNA synthetase family. MetG type 1 subfamily. Homodimer. Zn(2+) serves as cofactor.

It is found in the cytoplasm. It catalyses the reaction tRNA(Met) + L-methionine + ATP = L-methionyl-tRNA(Met) + AMP + diphosphate. In terms of biological role, is required not only for elongation of protein synthesis but also for the initiation of all mRNA translation through initiator tRNA(fMet) aminoacylation. This chain is Methionine--tRNA ligase, found in Dichelobacter nodosus (strain VCS1703A).